The following is a 626-amino-acid chain: (R)-linalool synthase 2, chloroplastic (626 aa).

The transit peptide at 1-21 (MAFVSIAPLASRCCVHKSFVS) directs the protein to the chloroplast. Mg(2+) is bound by residues Asp377, Asp381, and Glu529. Positions 377-381 (DDIYD) match the DDXXD motif motif.

Belongs to the terpene synthase family. Tpsd subfamily. The cofactor is Mg(2+). It depends on Mn(2+) as a cofactor.

It is found in the plastid. It localises to the chloroplast. The catalysed reaction is (2E)-geranyl diphosphate + H2O = (R)-linalool + diphosphate. The protein operates within terpene metabolism; oleoresin biosynthesis. Functionally, terpene synthase (mono-TPS) involved in the biosynthesis of monoterpene natural products included in conifer oleoresin secretions and volatile emissions; these compounds contribute to biotic and abiotic stress defense against herbivores and pathogens. Catalyzes the conversion of (2E)-geranyl diphosphate (GPP) to (R)-linalool. The chain is (R)-linalool synthase 2, chloroplastic from Picea sitchensis (Sitka spruce).